We begin with the raw amino-acid sequence, 256 residues long: Methylesterase 9 (256 aa).

Catalysis depends on serine 78, which acts as the Acyl-ester intermediate. Catalysis depends on charge relay system residues aspartate 206 and histidine 234.

The protein belongs to the AB hydrolase superfamily. Methylesterase family.

The catalysed reaction is methyl (indol-3-yl)acetate + H2O = (indol-3-yl)acetate + methanol + H(+). It carries out the reaction methyl (-)-jasmonate + H2O = jasmonate + methanol + H(+). It catalyses the reaction methyl salicylate + H2O = salicylate + methanol + H(+). Its pathway is plant hormone biosynthesis. The protein operates within lipid metabolism; oxylipin biosynthesis. Its activity is regulated as follows. Esterase activity is down-regulated by salicylic acid (SA). Methylesterase shown to have carboxylesterase activity, methyl indole-3-acetic acid (MeIAA) esterase activity, methyl salicylate (MeSA) esterase activity and methyl jasmonate (MeJA) esterase activity in vitro. Required to convert methyl salicylate (MeSA) to salicylic acid (SA) as part of the signal transduction pathways that activate systemic acquired resistance in systemic tissue. MeSA is believed to be an inactive form that needs to be demethylated to exert a biological effect. The polypeptide is Methylesterase 9 (Arabidopsis thaliana (Mouse-ear cress)).